We begin with the raw amino-acid sequence, 158 residues long: Cytochrome c2 (158 aa).

Position 1 is a pyrrolidone carboxylic acid (Q1). Positions 18, 21, 22, and 102 each coordinate heme c. A disordered region spans residues 129 to 158 (AEAAPAADAAAPAAADAAAPAEPAAEGAAT).

Belongs to the cytochrome c family. In terms of processing, binds 1 heme c group covalently per subunit.

It localises to the periplasm. Functionally, cytochrome c2 is found mainly in purple, non-sulfur, photosynthetic bacteria where it functions as the electron donor to the oxidized bacteriochlorophyll in the photophosphorylation pathway. However, it may also have a role in the respiratory chain and is found in some non-photosynthetic bacteria. The polypeptide is Cytochrome c2 (Fuscovulum blasticum (Rhodobacter blasticus)).